Reading from the N-terminus, the 430-residue chain is Gamma-glutamyl phosphate reductase (430 aa).

It belongs to the gamma-glutamyl phosphate reductase family.

Its subcellular location is the cytoplasm. It catalyses the reaction L-glutamate 5-semialdehyde + phosphate + NADP(+) = L-glutamyl 5-phosphate + NADPH + H(+). It participates in amino-acid biosynthesis; L-proline biosynthesis; L-glutamate 5-semialdehyde from L-glutamate: step 2/2. Functionally, catalyzes the NADPH-dependent reduction of L-glutamate 5-phosphate into L-glutamate 5-semialdehyde and phosphate. The product spontaneously undergoes cyclization to form 1-pyrroline-5-carboxylate. The sequence is that of Gamma-glutamyl phosphate reductase from Corynebacterium diphtheriae (strain ATCC 700971 / NCTC 13129 / Biotype gravis).